We begin with the raw amino-acid sequence, 359 residues long: Peptide chain release factor 1 (359 aa).

Gln-238 is subject to N5-methylglutamine.

Belongs to the prokaryotic/mitochondrial release factor family. In terms of processing, methylated by PrmC. Methylation increases the termination efficiency of RF1.

The protein localises to the cytoplasm. Functionally, peptide chain release factor 1 directs the termination of translation in response to the peptide chain termination codons UAG and UAA. This Mycoplasmopsis pulmonis (strain UAB CTIP) (Mycoplasma pulmonis) protein is Peptide chain release factor 1.